We begin with the raw amino-acid sequence, 1397 residues long: DNA-directed RNA polymerase subunit beta' (1397 aa).

Positions 75, 77, 90, and 93 each coordinate Zn(2+). 3 residues coordinate Mg(2+): Asp-465, Asp-467, and Asp-469. The Zn(2+) site is built by Cys-819, Cys-893, Cys-900, and Cys-903.

The protein belongs to the RNA polymerase beta' chain family. The RNAP catalytic core consists of 2 alpha, 1 beta, 1 beta' and 1 omega subunit. When a sigma factor is associated with the core the holoenzyme is formed, which can initiate transcription. The cofactor is Mg(2+). It depends on Zn(2+) as a cofactor.

The catalysed reaction is RNA(n) + a ribonucleoside 5'-triphosphate = RNA(n+1) + diphosphate. Its function is as follows. DNA-dependent RNA polymerase catalyzes the transcription of DNA into RNA using the four ribonucleoside triphosphates as substrates. This chain is DNA-directed RNA polymerase subunit beta', found in Acinetobacter baumannii (strain SDF).